The sequence spans 419 residues: tRNA modification GTPase MnmE (419 aa).

(6S)-5-formyl-5,6,7,8-tetrahydrofolate contacts are provided by arginine 2, glutamate 59, and arginine 99. Residues 197 to 343 (GLSVVIAGPP…LHTMIVEMAR (147 aa)) form the TrmE-type G domain. A K(+)-binding site is contributed by asparagine 207. GTP contacts are provided by residues 207–212 (NAGKST), 226–232 (SPVAGTT), and 251–254 (DTAG). Serine 211 serves as a coordination point for Mg(2+). K(+) contacts are provided by serine 226, valine 228, and threonine 231. Threonine 232 provides a ligand contact to Mg(2+). Lysine 419 is a binding site for (6S)-5-formyl-5,6,7,8-tetrahydrofolate.

This sequence belongs to the TRAFAC class TrmE-Era-EngA-EngB-Septin-like GTPase superfamily. TrmE GTPase family. As to quaternary structure, homodimer. Heterotetramer of two MnmE and two MnmG subunits. It depends on K(+) as a cofactor.

Its subcellular location is the cytoplasm. Exhibits a very high intrinsic GTPase hydrolysis rate. Involved in the addition of a carboxymethylaminomethyl (cmnm) group at the wobble position (U34) of certain tRNAs, forming tRNA-cmnm(5)s(2)U34. This chain is tRNA modification GTPase MnmE, found in Sphingopyxis alaskensis (strain DSM 13593 / LMG 18877 / RB2256) (Sphingomonas alaskensis).